The following is a 459-amino-acid chain: Flagellar radial spoke protein 6 (459 aa).

Residue arginine 267 is modified to Asymmetric dimethylarginine. A disordered region spans residues 309–330 (QGRTVTHKRDPPDEEEEPEKNF). Arginine 398 bears the Asymmetric dimethylarginine mark. The disordered stretch occupies residues 418–459 (CPPPPPVPQWGAPAAGVEGGQQLLLECNDLPPKPAPPEEEDE).

This sequence belongs to the flagellar radial spoke RSP4/6 family. In terms of assembly, the radial spoke head is made of five different polypeptides (RSP1, RSP4, RSP6, RSP9, and RSP10). In terms of processing, asymmetrically dimethylated at Arg-267 and Arg-398 during flagellum resorption. Probably methylated by PRMT1.

Its subcellular location is the cytoplasm. It localises to the cytoskeleton. It is found in the flagellum axoneme. Flagellar radial spokes contribute to the regulation of dynein arm activity and thus the pattern of flagellar bending. They consist of a thin stalk, which is attached to the a subfiber of the outer doublet microtubule, and a bulbous head, which is attached to the stalk and appears to interact with the projections from the central pair of microtubules. The chain is Flagellar radial spoke protein 6 (RSP6) from Chlamydomonas reinhardtii (Chlamydomonas smithii).